The chain runs to 178 residues: Caveolin-1 (178 aa).

Ser-2 bears the N-acetylserine mark. Ser-2 carries the phosphoserine modification. Residues 2-94 (SGGKYVDSEG…WKASFTTFTV (93 aa)) are required for homooligomerization. The Cytoplasmic segment spans residues 2 to 104 (SGGKYVDSEG…TKYWFYRLLS (103 aa)). Lys-5 is subject to N6-acetyllysine; alternate. Residue Lys-5 forms a Glycyl lysine isopeptide (Lys-Gly) (interchain with G-Cter in ubiquitin); alternate linkage. Tyr-6 carries the post-translational modification Phosphotyrosine. Ser-9 carries the post-translational modification Phosphoserine. A Phosphotyrosine; by ABL1 modification is found at Tyr-14. Tyr-25 is subject to Phosphotyrosine. Residues Lys-26 and Lys-30 each participate in a glycyl lysine isopeptide (Lys-Gly) (interchain with G-Cter in ubiquitin) cross-link. The residue at position 37 (Ser-37) is a Phosphoserine. Residues Lys-39, Lys-47, and Lys-57 each participate in a glycyl lysine isopeptide (Lys-Gly) (interchain with G-Cter in ubiquitin) cross-link. The interaction with CAVIN3 stretch occupies residues 82–94 (DGIWKASFTTFTV). The segment at residues 105–125 (ALFGIPMALIWGIYFAILSFL) is an intramembrane region (helical). Residues 126 to 178 (HIWAVVPCIKSFLIEIQCISRVYSIYVHTVCDPLFEAVGKIFSNVRINLQKEI) are Cytoplasmic-facing. The interval 131–142 (VPCIKSFLIEIQ) is interacts with SPRY1, SPRY2, SPRY3 and SPRY4. S-palmitoyl cysteine attachment occurs at residues Cys-133, Cys-143, and Cys-156. Residues 149–160 (SIYVHTVCDPLF) form an interacts with SPRY1, SPRY2, and SPRY4 region. Residues 167–178 (FSNVRINLQKEI) form an interacts with SPRY1, SPRY2, SPRY3 and SPRY4 region.

This sequence belongs to the caveolin family. In terms of assembly, homooligomer. Interacts (via the N-terminus) with DPP4; the interaction is direct. Forms a stable heterooligomeric complex with CAV2 that targets to lipid rafts and drives caveolae formation. Interacts with PACSIN2; this interaction induces membrane tubulation. Interacts with BMX, BTK, CTNNB1, CDH1, GLIPR2, JUP, NOSTRIN, SNAP25 and STX1A. Interacts with SLC7A9. Interacts with TGFBR1. Interacts with CAVIN3 (via leucine-zipper domain) in a cholesterol-sensitive manner. Interacts with CAVIN1. Interacts with EHD2 in a cholesterol-dependent manner. Forms a ternary complex with UBXN6 and VCP; mediates CAV1 targeting to lysosomes for degradation. Interacts with ABCG1; this interaction regulates ABCG1-mediated cholesterol efflux. Interacts with NEU3; this interaction enhances NEU3 sialidase activity within caveola. Interacts (via C-terminus) with SPRY1, SPRY2 (via C-terminus), SPRY3, and SPRY4. Interacts with IGFBP5; this interaction allows trafficking of IGFBP5 from the plasma membrane to the nucleus. Post-translationally, phosphorylated at Tyr-14 by ABL1 in response to oxidative stress. In terms of processing, ubiquitinated. Undergo monoubiquitination and multi- and/or polyubiquitination. Monoubiquitination of N-terminal lysines promotes integration in a ternary complex with UBXN6 and VCP which promotes oligomeric CAV1 targeting to lysosomes for degradation. Ubiquitinated by ZNRF1; leading to degradation and modulation of the TLR4-mediated immune response.

The protein resides in the golgi apparatus membrane. It is found in the cell membrane. Its subcellular location is the membrane. The protein localises to the caveola. It localises to the membrane raft. In terms of biological role, may act as a scaffolding protein within caveolar membranes. Forms a stable heterooligomeric complex with CAV2 that targets to lipid rafts and drives caveolae formation. Mediates the recruitment of CAVIN proteins (CAVIN1/2/3/4) to the caveolae. Interacts directly with G-protein alpha subunits and can functionally regulate their activity. Involved in the costimulatory signal essential for T-cell receptor (TCR)-mediated T-cell activation. Its binding to DPP4 induces T-cell proliferation and NF-kappa-B activation in a T-cell receptor/CD3-dependent manner. Recruits CTNNB1 to caveolar membranes and may regulate CTNNB1-mediated signaling through the Wnt pathway. Negatively regulates TGFB1-mediated activation of SMAD2/3 by mediating the internalization of TGFBR1 from membrane rafts leading to its subsequent degradation. Binds 20(S)-hydroxycholesterol (20(S)-OHC). The sequence is that of Caveolin-1 (CAV1) from Chlorocebus aethiops (Green monkey).